A 63-amino-acid polypeptide reads, in one-letter code: Large ribosomal subunit protein uL30 (63 aa).

This sequence belongs to the universal ribosomal protein uL30 family. As to quaternary structure, part of the 50S ribosomal subunit.

This chain is Large ribosomal subunit protein uL30, found in Hahella chejuensis (strain KCTC 2396).